Consider the following 991-residue polypeptide: Polyribonucleotide nucleotidyltransferase 2, mitochondrial (991 aa).

The transit peptide at 1-39 (MSSIVNRASSASLPNFLAWRALGFRTICSGRLGFAPSVP) directs the protein to the mitochondrion. The region spanning 609–667 (PRLATLKYSNDSLRTLIGPMGVLKRKIEVETGARLSIDNGTLTIVAKNQDVMEKAQEQV) is the KH domain. An S1 motif 1 domain is found at 678 to 746 (GGVYKGTVSS…VRGNIKLSRK (69 aa)). The segment at 813–865 (EAEKSSPVNDNDKPRRAATSKPDRKPKSTASKLIATQKEEEALESIAPEETSA) is disordered. Residues 822–838 (DNDKPRRAATSKPDRKP) are compositionally biased toward basic and acidic residues. The region spanning 925-987 (GTEMTATVDH…GVPVMALVDE (63 aa)) is the S1 motif 2 domain.

It belongs to the polyribonucleotide nucleotidyltransferase family.

Its subcellular location is the mitochondrion. The catalysed reaction is RNA(n+1) + phosphate = RNA(n) + a ribonucleoside 5'-diphosphate. Involved in the 3'-end maturation of mitochondrial mRNAs, rRNAs and tRNAs. Functions as a poly(A) mRNA 3'-5' degrading phosphorylase and is required for the degradation of highly expressed transcripts of non-coding regions. In Arabidopsis thaliana (Mouse-ear cress), this protein is Polyribonucleotide nucleotidyltransferase 2, mitochondrial (PNP2).